Reading from the N-terminus, the 147-residue chain is Small ribosomal subunit protein uS12 (147 aa).

Belongs to the universal ribosomal protein uS12 family. In terms of assembly, part of the 30S ribosomal subunit.

Functionally, with S4 and S5 plays an important role in translational accuracy. Located at the interface of the 30S and 50S subunits. The sequence is that of Small ribosomal subunit protein uS12 from Thermococcus celer.